The following is a 1155-amino-acid chain: Agglutinin-like protein 3 (1155 aa).

The N-terminal stretch at 1-17 (MLQQYTLLLIYLSVATA) is a signal peptide. Intrachain disulfides connect Cys-73–Cys-150, Cys-96–Cys-112, Cys-205–Cys-298, and Cys-227–Cys-256. ALS repeat units follow at residues 365-396 (TTIT…VDIP), 401-432 (TTVT…VQVP), and 438-469 (VTTT…IREP). An N-linked (GlcNAc...) asparagine glycan is attached at Asn-471. 2 ALS repeats span residues 474–505 (VTTT…IKEP) and 510–541 (VTTT…IREP). N-linked (GlcNAc...) asparagine glycosylation occurs at Asn-543. ALS repeat units follow at residues 546–577 (VTTT…IREP) and 582–613 (VTTT…IREP). The N-linked (GlcNAc...) asparagine glycan is linked to Asn-615. The ALS 8 repeat unit spans residues 618-649 (VTTTEYWSQSYATTTTITAPPGETDTVLIREP). Residue Asn-651 is glycosylated (N-linked (GlcNAc...) asparagine). ALS repeat units lie at residues 654–685 (VTTT…IKEP) and 690–721 (VTTT…IREP). Asn-723 is a glycosylation site (N-linked (GlcNAc...) asparagine). One copy of the ALS 11 repeat lies at 726 to 757 (VTTTEYWSQSYATTTTITAPPGETDTVLIREP). N-linked (GlcNAc...) asparagine glycosylation occurs at Asn-759. The ALS 12 repeat unit spans residues 762 to 793 (VTTTEYWSQSFATTTTVTAPPGGTDTVIIREP). Residue Asn-795 is glycosylated (N-linked (GlcNAc...) asparagine). ALS repeat units lie at residues 798 to 829 (VTTT…IREP) and 834 to 863 (VTTT…VIIY). Asn-881 carries N-linked (GlcNAc...) asparagine glycosylation. The interval 936 to 1115 (TTTESTLQSP…NSDTQQTTLS (180 aa)) is disordered. Residues 949 to 965 (FSESGVSVETESSTFTT) are compositionally biased toward low complexity. Over residues 966–977 (AQTNPSVPTTES) the composition is skewed to polar residues. A compositionally biased stretch (low complexity) spans 1010–1019 (TTSTAASTST). An N-linked (GlcNAc...) asparagine glycan is attached at Asn-1023. Composition is skewed to low complexity over residues 1034 to 1058 (ASSP…STSV) and 1071 to 1115 (APSA…TTLS). N-linked (GlcNAc...) asparagine glycosylation occurs at Asn-1099. Ser-1134 carries GPI-anchor amidated serine lipidation. The propeptide at 1135–1155 (GSVIQHSTWLCGLITLLSLFI) is removed in mature form.

This sequence belongs to the ALS family. Post-translationally, the GPI-anchor is attached to the protein in the endoplasmic reticulum and serves to target the protein to the cell surface. There, the glucosamine-inositol phospholipid moiety is cleaved off and the GPI-modified mannoprotein is covalently attached via its lipidless GPI glycan remnant to the 1,6-beta-glucan of the outer cell wall layer.

Its subcellular location is the cell membrane. The protein resides in the secreted. It is found in the cell wall. Functionally, cell surface adhesion protein which mediates both yeast-to-host tissue adherence and yeast aggregation. Plays an important role in the biofilm formation and pathogenesis of C.albicans infections. Necessary for C.albicans to bind to N-cadherin on endothelial cells and E-cadherin on oral epithelial cells and subsequent endocytosis by these cells. During disseminated infection, mediates initial trafficking to the brain and renal cortex and contributes to fungal persistence in the kidneys. The sequence is that of Agglutinin-like protein 3 (ALS3) from Candida albicans (strain SC5314 / ATCC MYA-2876) (Yeast).